Consider the following 141-residue polypeptide: General odorant-binding protein 57b (141 aa).

Positions 1 to 22 are cleaved as a signal peptide; sequence MFIYRLVFIAPLILLLFSLAKA. 3 disulfide bridges follow: Cys39/Cys77, Cys73/Cys120, and Cys111/Cys129.

Belongs to the PBP/GOBP family.

Functionally, present in the aqueous fluid surrounding olfactory sensory dendrites and are thought to aid in the capture and transport of hydrophobic odorants into and through this fluid. This is General odorant-binding protein 57b from Drosophila melanogaster (Fruit fly).